The following is a 342-amino-acid chain: S-adenosylmethionine:tRNA ribosyltransferase-isomerase (342 aa).

Belongs to the QueA family. In terms of assembly, monomer.

It is found in the cytoplasm. The catalysed reaction is 7-aminomethyl-7-carbaguanosine(34) in tRNA + S-adenosyl-L-methionine = epoxyqueuosine(34) in tRNA + adenine + L-methionine + 2 H(+). It participates in tRNA modification; tRNA-queuosine biosynthesis. In terms of biological role, transfers and isomerizes the ribose moiety from AdoMet to the 7-aminomethyl group of 7-deazaguanine (preQ1-tRNA) to give epoxyqueuosine (oQ-tRNA). This chain is S-adenosylmethionine:tRNA ribosyltransferase-isomerase, found in Bacillus velezensis (strain DSM 23117 / BGSC 10A6 / LMG 26770 / FZB42) (Bacillus amyloliquefaciens subsp. plantarum).